Consider the following 234-residue polypeptide: Probable septum site-determining protein MinC (234 aa).

Belongs to the MinC family. As to quaternary structure, interacts with MinD and FtsZ.

In terms of biological role, cell division inhibitor that blocks the formation of polar Z ring septums. Rapidly oscillates between the poles of the cell to destabilize FtsZ filaments that have formed before they mature into polar Z rings. Prevents FtsZ polymerization. The chain is Probable septum site-determining protein MinC from Pseudoalteromonas translucida (strain TAC 125).